Reading from the N-terminus, the 681-residue chain is Conserved oligomeric Golgi complex subunit 2 (681 aa).

This sequence belongs to the COG2 family. In terms of assembly, component of the conserved oligomeric Golgi complex which is composed of eight different subunits and is required for normal Golgi morphology and localization.

The protein resides in the golgi apparatus membrane. Required for normal Golgi morphology and function. This is Conserved oligomeric Golgi complex subunit 2 (cogc-2) from Caenorhabditis elegans.